The primary structure comprises 277 residues: Shikimate dehydrogenase (NADP(+)) (277 aa).

Shikimate-binding positions include 15 to 17 and T62; that span reads SLS. K66 functions as the Proton acceptor in the catalytic mechanism. Positions 87 and 102 each coordinate shikimate. Residues 127–131 and I219 each bind NADP(+); that span reads GAGGA. Y221 provides a ligand contact to shikimate. Position 242 (G242) interacts with NADP(+).

It belongs to the shikimate dehydrogenase family. As to quaternary structure, homodimer.

It catalyses the reaction shikimate + NADP(+) = 3-dehydroshikimate + NADPH + H(+). It functions in the pathway metabolic intermediate biosynthesis; chorismate biosynthesis; chorismate from D-erythrose 4-phosphate and phosphoenolpyruvate: step 4/7. Its function is as follows. Involved in the biosynthesis of the chorismate, which leads to the biosynthesis of aromatic amino acids. Catalyzes the reversible NADPH linked reduction of 3-dehydroshikimate (DHSA) to yield shikimate (SA). The sequence is that of Shikimate dehydrogenase (NADP(+)) from Bacillus cytotoxicus (strain DSM 22905 / CIP 110041 / 391-98 / NVH 391-98).